A 678-amino-acid chain; its full sequence is MGLLALGTPLQWFESRTYNEHIRDEGIEQLLYIFQAAGKRDNDPLFWGDELEYMVVDFDDKERNSMLDVCHDKILTELNMEDSSLCEANDVSFHPEYGRYMLEATPASPYLNYVGSYVEVNMQKRRAIAEYKLSEYARQDSKNNLHVGSRSVPLTLTVFPRMGCPDFINIKDPWNHKNAASRSLFLPDEVINRHVRFPNLTASIRTRRGEKVCMNVPMYKDIATPETDDSIYDRDWFLPEDKEAKLASKPGFIYMDSMGFGMGCSCLQVTFQAPNINKARYLYDALVNFAPIMLAFSAAAPAFKGWLADQDVRWNVISGAVDDRTPKERGVAPLLPKYNKNGFGGIAKDVQDKVLEIPKSRYSSVDLFLGGSKFFNRTYNDTNVPINEKVLGRLLENDKAPLDYDLAKHFAHLYIRDPVSTFEELLNQDNKTSSNHFENIQSTNWQTLRFKPPTQQATPDKKDSPGWRVEFRPFEVQLLDFENAAYSVLIYLIVDSILTFSDNINAYIHMSKVWENMKIAHHRDAILFEKFHWKKSFRNDTDVETEDYSISEIFHNPENGIFPQFVTPILCQKGFVTKDWKELKHSSKHERLYYYLKLISDRASGELPTTAKFFRNFVLQHPDYKHDSKISKSINYDLLSTCDRLTHLDDSKGELTSFLGAEIAEYVKKNKPSIESKC.

It belongs to the glutamate--cysteine ligase type 3 family.

It catalyses the reaction L-cysteine + L-glutamate + ATP = gamma-L-glutamyl-L-cysteine + ADP + phosphate + H(+). The protein operates within sulfur metabolism; glutathione biosynthesis; glutathione from L-cysteine and L-glutamate: step 1/2. Feedback inhibition by glutathione. Its function is as follows. Catalyzes the ATP-dependent condensation of cysteine and glutamate to form the dipeptide gamma-glutamylcysteine (gamma-GC), the first and rate-limiting step in the production of glutathione (GSH). The polypeptide is Glutamate--cysteine ligase (GSH1) (Saccharomyces cerevisiae (strain ATCC 204508 / S288c) (Baker's yeast)).